Here is a 1050-residue protein sequence, read N- to C-terminus: Mitotic checkpoint serine/threonine-protein kinase BUB1 beta (1050 aa).

Residues 62–226 (FEYEIRFYTG…FESSVPQRST (165 aa)) form the BUB1 N-terminal domain. The Nuclear localization signal motif lies at 111 to 118 (GEKRYYSD). The tract at residues 152–185 (AQFYISWAEEYEARENFRKADAIFQEGIQQKAEP) is necessary for interaction with KNL1. The short motif at 224 to 232 (RSTLAELKS) is the D-box element. Lys-250 is subject to N6-acetyllysine; by PCAF. Ser-367 is modified (phosphoserine). Residues 368–393 (TRKPGKEEGDPLQRVQSHQQASEEKK) are disordered. Residue Ser-435 is modified to Phosphoserine. The interval 456 to 480 (IQTTQQERTGDQQEETMPTKETTKL) is disordered. Ser-543, Ser-665, and Ser-670 each carry phosphoserine. Ser-676 is modified (phosphoserine; by PLK1). Ser-697 is subject to Phosphoserine. The region spanning 766–1050 (YCIKREYLIC…LTSPGALLFQ (285 aa)) is the Protein kinase domain. Residue 772–780 (YLICEDYKL) participates in ATP binding. Phosphothreonine; by PLK1 is present on Thr-792. Lys-795 contributes to the ATP binding site. Asp-882 (proton acceptor) is an active-site residue. Thr-1008 is modified (phosphothreonine; by PLK1). Residue Thr-1042 is modified to Phosphothreonine. At Ser-1043 the chain carries Phosphoserine.

It belongs to the protein kinase superfamily. Ser/Thr protein kinase family. BUB1 subfamily. As to quaternary structure, interacts with CENPE. Interacts with PLK1. Part of a complex containing BUB3, CDC20 and BUB1B. Interacts with anaphase-promoting complex/cyclosome (APC/C). Interacts with KNL1. Interacts with KAT2B. Interacts with RIPK3. Interacts with the closed conformation form of MAD2L1. In terms of processing, proteolytically cleaved by caspase-3 in a cell cycle specific manner. The cleavage might be involved in the durability of the cell cycle delay. Caspase-3 cleavage is associated with abrogation of the mitotic checkpoint. The major site of cleavage is at Asp-610. Post-translationally, acetylation at Lys-250 regulates its degradation and timing in anaphase entry. Ubiquitinated. Degraded by the proteasome. Ubiquitinated by UBR5, promoting disassembly of the mitotic checkpoint complex from the APC/C complex. In terms of processing, sumoylated with SUMO2 and SUMO3. The sumoylation mediates the association with CENPE at the kinetochore. Post-translationally, autophosphorylated in vitro. Intramolecular autophosphorylation is stimulated by CENPE. Phosphorylated during mitosis and hyperphosphorylated in mitotically arrested cells. Phosphorylation at Ser-670 and Ser-1043 occurs at kinetochores upon mitotic entry with dephosphorylation at the onset of anaphase. Highly expressed in thymus followed by spleen. Preferentially expressed in tissues with a high mitotic index.

Its subcellular location is the cytoplasm. It is found in the nucleus. The protein localises to the chromosome. The protein resides in the centromere. It localises to the kinetochore. Its subcellular location is the cytoskeleton. It is found in the microtubule organizing center. The protein localises to the centrosome. It carries out the reaction L-seryl-[protein] + ATP = O-phospho-L-seryl-[protein] + ADP + H(+). It catalyses the reaction L-threonyl-[protein] + ATP = O-phospho-L-threonyl-[protein] + ADP + H(+). Its activity is regulated as follows. Kinase activity stimulated by CENPE. Its function is as follows. Essential component of the mitotic checkpoint. Required for normal mitosis progression. The mitotic checkpoint delays anaphase until all chromosomes are properly attached to the mitotic spindle. One of its checkpoint functions is to inhibit the activity of the anaphase-promoting complex/cyclosome (APC/C) by blocking the binding of CDC20 to APC/C, independently of its kinase activity. The other is to monitor kinetochore activities that depend on the kinetochore motor CENPE. Required for kinetochore localization of CENPE. Negatively regulates PLK1 activity in interphase cells and suppresses centrosome amplification. Also implicated in triggering apoptosis in polyploid cells that exit aberrantly from mitotic arrest. May play a role for tumor suppression. In Homo sapiens (Human), this protein is Mitotic checkpoint serine/threonine-protein kinase BUB1 beta (BUB1B).